The following is a 199-amino-acid chain: N-(5'-phosphoribosyl)anthranilate isomerase (199 aa).

This sequence belongs to the TrpF family.

It catalyses the reaction N-(5-phospho-beta-D-ribosyl)anthranilate = 1-(2-carboxyphenylamino)-1-deoxy-D-ribulose 5-phosphate. It functions in the pathway amino-acid biosynthesis; L-tryptophan biosynthesis; L-tryptophan from chorismate: step 3/5. This Campylobacter jejuni subsp. jejuni serotype O:2 (strain ATCC 700819 / NCTC 11168) protein is N-(5'-phosphoribosyl)anthranilate isomerase.